A 275-amino-acid polypeptide reads, in one-letter code: Formamidopyrimidine-DNA glycosylase (275 aa).

The active-site Schiff-base intermediate with DNA is P2. The active-site Proton donor is E3. Residue K58 is the Proton donor; for beta-elimination activity of the active site. H91 and R110 together coordinate DNA. The segment at 238-272 adopts an FPG-type zinc-finger fold; the sequence is QVYGQTGKPCPRCGQAIVKLKVGGRGTHICPKCQK. R262 (proton donor; for delta-elimination activity) is an active-site residue.

The protein belongs to the FPG family. In terms of assembly, monomer. The cofactor is Zn(2+).

The catalysed reaction is Hydrolysis of DNA containing ring-opened 7-methylguanine residues, releasing 2,6-diamino-4-hydroxy-5-(N-methyl)formamidopyrimidine.. The enzyme catalyses 2'-deoxyribonucleotide-(2'-deoxyribose 5'-phosphate)-2'-deoxyribonucleotide-DNA = a 3'-end 2'-deoxyribonucleotide-(2,3-dehydro-2,3-deoxyribose 5'-phosphate)-DNA + a 5'-end 5'-phospho-2'-deoxyribonucleoside-DNA + H(+). Its function is as follows. Involved in base excision repair of DNA damaged by oxidation or by mutagenic agents. Acts as a DNA glycosylase that recognizes and removes damaged bases. Has a preference for oxidized purines, such as 7,8-dihydro-8-oxoguanine (8-oxoG). Has AP (apurinic/apyrimidinic) lyase activity and introduces nicks in the DNA strand. Cleaves the DNA backbone by beta-delta elimination to generate a single-strand break at the site of the removed base with both 3'- and 5'-phosphates. This is Formamidopyrimidine-DNA glycosylase from Streptococcus pyogenes serotype M6 (strain ATCC BAA-946 / MGAS10394).